The following is a 591-amino-acid chain: Thiol:disulfide interchange protein DsbD 1 (591 aa).

The first 18 residues, 1–18, serve as a signal peptide directing secretion; the sequence is MRRLLTLILLLVALPAGA. The Periplasmic portion of the chain corresponds to 19–175; the sequence is GLFDSRPGAS…GPLEHKGKRS (157 aa). 2 disulfides stabilise this stretch: C134–C140 and C191–C313. A helical transmembrane segment spans residues 176–196; it reads LLFFFLAGLTLTFTPCVLPML. Topologically, residues 197-213 are cytoplasmic; sequence PILSGVVLRGRPGGGRG. A helical transmembrane segment spans residues 214–234; sequence FVLSLAYVLPMALCFALLGAL. At 235-251 the chain is on the periplasmic side; sequence MGMFGASLNLQAQLQSP. A helical membrane pass occupies residues 252 to 272; that stretch reads WVLVPFAAFFALFAVAMFGFF. At 273 to 295 the chain is on the cytoplasmic side; sequence ELRLPGFIREPLDRLAGDARGGS. A helical transmembrane segment spans residues 296–316; it reads ILGAATLGVLSSLLVSPCVSA. The Periplasmic segment spans residues 317-338; it reads PLAASLLYISASGDAWGGGLQL. The helical transmembrane segment at 339–359 threads the bilayer; that stretch reads FALGLGMGTPLVVFGAGGGAL. The Cytoplasmic segment spans residues 360-365; the sequence is LPKSGA. The helical transmembrane segment at 366–386 threads the bilayer; that stretch reads WMNGVRNAFGVLLLAVAVWLL. The Periplasmic portion of the chain corresponds to 387-392; that stretch reads ERVVSG. A helical membrane pass occupies residues 393–413; it reads PVALMLWGMLAGGAGLALGAL. The Cytoplasmic portion of the chain corresponds to 414–423; it reads EFTPKSAARR. A helical transmembrane segment spans residues 424–444; that stretch reads LLQLLGLMFLTYAVAAWIGAL. Over 445-591 the chain is Periplasmic; sequence QGESDPIHPL…ERLRRAATRQ (147 aa). One can recognise a Thioredoxin domain in the interval 452 to 589; sequence HPLGRSVPSI…LAERLRRAAT (138 aa). The cysteines at positions 504 and 507 are disulfide-linked.

The protein belongs to the thioredoxin family. DsbD subfamily.

The protein resides in the cell inner membrane. It carries out the reaction [protein]-dithiol + NAD(+) = [protein]-disulfide + NADH + H(+). It catalyses the reaction [protein]-dithiol + NADP(+) = [protein]-disulfide + NADPH + H(+). Functionally, required to facilitate the formation of correct disulfide bonds in some periplasmic proteins and for the assembly of the periplasmic c-type cytochromes. Acts by transferring electrons from cytoplasmic thioredoxin to the periplasm. This transfer involves a cascade of disulfide bond formation and reduction steps. The chain is Thiol:disulfide interchange protein DsbD 1 from Pseudomonas aeruginosa (strain ATCC 15692 / DSM 22644 / CIP 104116 / JCM 14847 / LMG 12228 / 1C / PRS 101 / PAO1).